The primary structure comprises 494 residues: MKARVRFAPSPTGPLHIGSIRTALYNYLFAKKYHGDFILRIEDTDSTRFIPGAEEYIIETFKWLGITFDEGPYRQSERKAIYKEYVDELLNKNLAYIAFDTPEELEAKRRNIPNFQYDAITRMTMNNSLTLSKEETKKRIANSNQYVVRIKIDPNQTIIVNDLIRGEMSISSSTLDDKVLYKSSDNLPTYHLANIVDDHLMKITHVIRGEEWLSSTPLHIILYQYFGWGEKMPVFAHLPLLLKPDGKGKLSKRDGERFGFPIFPLQWTDSKTGKSISGYREDGYLPEALINFLALLGWNPGSEQEFFSIDELSVLFSLKKCSKNGAKFDYKKVEWFNHQYIQKKSDKEIAELFFHFYSKKLEKQDFKKITEVIGMVKGRISSIRDLWYETAFFFVAPNTYDEKIVQKRWRAESPIQLTELSELLATITNFSLQIVEKTIRGWINNKGYHPSNIMNACRLALVGTAKGPGIFHIIEILGKEEVIIRIKKAIQVLR.

A 'HIGH' region motif is present at residues Pro-9 to Ser-19. The short motif at Lys-249–Arg-253 is the 'KMSKS' region element. Lys-252 is a binding site for ATP.

Belongs to the class-I aminoacyl-tRNA synthetase family. Glutamate--tRNA ligase type 1 subfamily. In terms of assembly, monomer.

It is found in the cytoplasm. It carries out the reaction tRNA(Glu) + L-glutamate + ATP = L-glutamyl-tRNA(Glu) + AMP + diphosphate. In terms of biological role, catalyzes the attachment of glutamate to tRNA(Glu) in a two-step reaction: glutamate is first activated by ATP to form Glu-AMP and then transferred to the acceptor end of tRNA(Glu). This is Glutamate--tRNA ligase from Azobacteroides pseudotrichonymphae genomovar. CFP2.